A 118-amino-acid polypeptide reads, in one-letter code: Large ribosomal subunit protein uL18 (118 aa).

This sequence belongs to the universal ribosomal protein uL18 family. In terms of assembly, part of the 50S ribosomal subunit; part of the 5S rRNA/L5/L18/L25 subcomplex. Contacts the 5S and 23S rRNAs.

Functionally, this is one of the proteins that bind and probably mediate the attachment of the 5S RNA into the large ribosomal subunit, where it forms part of the central protuberance. The sequence is that of Large ribosomal subunit protein uL18 from Acidobacterium capsulatum (strain ATCC 51196 / DSM 11244 / BCRC 80197 / JCM 7670 / NBRC 15755 / NCIMB 13165 / 161).